Consider the following 155-residue polypeptide: Protein-export protein SecB (155 aa).

This sequence belongs to the SecB family. As to quaternary structure, homotetramer, a dimer of dimers. One homotetramer interacts with 1 SecA dimer.

Its subcellular location is the cytoplasm. One of the proteins required for the normal export of preproteins out of the cell cytoplasm. It is a molecular chaperone that binds to a subset of precursor proteins, maintaining them in a translocation-competent state. It also specifically binds to its receptor SecA. This is Protein-export protein SecB from Salmonella heidelberg (strain SL476).